Here is a 951-residue protein sequence, read N- to C-terminus: MHKRKGPPGPPGRGAAAARQLGLLVDLSPDGLMIPEDGANDEELEAEFLALVGGQPPALEKLKGKGPLPMEAIEKMASLCMRDPDEDEEEGTDEDDLEADDDLLAELNEVLGEEQKASETPPPVAQPKPEAPHPGLETTLQERLALYQTAIESARQAGDSAKMRRYDRGLKTLENLLASIRKGNAIDEADIPPPVAIGKGPASTPTYSPAPTQPAPRIASAPEPRVTLEGPSATAPASSPGLAKPQMPPGPCSPGPLAQLQSRQRDYKLAALHAKQQGDTTAAARHFRVAKSFDAVLEALSRGEPVDLSCLPPPPDQLPPDPPSPPSQPPTPATAPSTTEVPPPPRTLLEALEQRMERYQVAAAQAKSKGDQRKARMHERIVKQYQDAIRAHKAGRAVDVAELPVPPGFPPIQGLEATKPTQQSLVGVLETAMKLANQDEGPEDEEDEVPKKQNSPVAPTAQPKAPPSRTPQSGSAPTAKAPPKATSTRAQQQLAFLEGRKKQLLQAALRAKQKNDVEGAKMHLRQAKGLEPMLEASRNGLPVDITKVPPAPVNKDDFALVQRPGPGLSQEAARRYGELTKLIRQQHEMCLNHSNQFTQLGNITETTKFEKLAEDCKRSMDILKQAFVRGLPTPTARFEQRTFSVIKIFPDLSSNDMLLFIVKGINLPTPPGLSPGDLDVFVRFDFPYPNVEEAQKDKTSVIKNTDSPEFKEQFKLCINRSHRGFRRAIQTKGIKFEVVHKGGLFKTDRVLGTAQLKLDALEIACEVREILEVLDGRRPTGGRLEVMVRIREPLTAQQLETTTERWLVIDPVPAAVPTQVAGPKGKAPPVPAPARESGNRSARPLHSLSVLAFDQERLERKILALRQARRPVPPEVAQQYQDIMQRSQWQRAQLEQGGVGIRREYAAQLERQLQFYTEAARRLGNDGSRDAAKEALYRRNLVESELQRLRR.

Disordered regions lie at residues 80 to 139 (CMRD…LETT), 185 to 266 (AIDE…RQRD), 306 to 346 (VDLS…PPPR), and 437 to 491 (NQDE…TRAQ). Residues 84 to 104 (PDEDEEEGTDEDDLEADDDLL) are compositionally biased toward acidic residues. A phosphothreonine mark is found at T92, T204, and T206. Residues 201 to 210 (PASTPTYSPA) are compositionally biased toward low complexity. At S208 the chain carries Phosphoserine; by CDK1. Phosphoserine is present on residues S253 and S324. The span at 311-333 (LPPPPDQLPPDPPSPPSQPPTPA) shows a compositional bias: pro residues. Residues 346–392 (RTLLEALEQRMERYQVAAAQAKSKGDQRKARMHERIVKQYQDAIRAH) are a coiled coil. Phosphoserine is present on S455. Residues 475 to 488 (SAPTAKAPPKATST) show a composition bias toward low complexity. Residues 484 to 517 (KATSTRAQQQLAFLEGRKKQLLQAALRAKQKNDV) are a coiled coil. Residues 637-771 (RFEQRTFSVI…EIACEVREIL (135 aa)) form the C2 domain. Residues 818–841 (TQVAGPKGKAPPVPAPARESGNRS) form a disordered region.

It belongs to the CC2D1 family. Phosphorylation on Ser-208 by CDK1 promotes spindle pole localization and association with SCC1/RAD21.

The protein resides in the cytoplasm. The protein localises to the nucleus. It is found in the cytoskeleton. It localises to the microtubule organizing center. Its subcellular location is the centrosome. Functionally, transcription factor that binds specifically to the DRE (dual repressor element) and represses HTR1A gene transcription in neuronal cells. The combination of calcium and ATP specifically inactivates the binding with FRE. May play a role in the altered regulation of HTR1A associated with anxiety and major depression. Mediates HDAC-independent repression of HTR1A promoter in neuronal cell. Performs essential function in controlling functional maturation of synapses. Plays distinct roles depending on its localization. When cytoplasmic, acts as a scaffold protein in the PI3K/PDK1/AKT pathway. Repressor of HTR1A when nuclear. In the centrosome, regulates spindle pole localization of the cohesin subunit SCC1/RAD21, thereby mediating centriole cohesion during mitosis. This chain is Coiled-coil and C2 domain-containing protein 1A (CC2D1A), found in Homo sapiens (Human).